Reading from the N-terminus, the 355-residue chain is Protein RecA (355 aa).

65–72 contributes to the ATP binding site; that stretch reads GPESSGKT.

It belongs to the RecA family.

It localises to the cytoplasm. Its function is as follows. Can catalyze the hydrolysis of ATP in the presence of single-stranded DNA, the ATP-dependent uptake of single-stranded DNA by duplex DNA, and the ATP-dependent hybridization of homologous single-stranded DNAs. It interacts with LexA causing its activation and leading to its autocatalytic cleavage. The polypeptide is Protein RecA (Pseudomonas putida (Arthrobacter siderocapsulatus)).